Here is a 1010-residue protein sequence, read N- to C-terminus: MAARVLVIGNGGREHTLAWKLAQSTHVKQVLVTPGNAGTACSEKISNTDISISDHTALAQFCKDEKIEFVVVGPEAPLAAGIVGNLNSVGVRCFGPTAQAAQLESSKRFAKEFMDRHGISTARWRAFTKPKEACDFIMSADFPALVVKASGLAAGKGVIVAKSKEEACEAVREIMQGKAFGEAGETVVIEELLEGEEVSCLCFTDGRTVAPMPPAQDHKRLLEGDEGPNTGGMGAYCPAPQVSKDLLLKIKNNILQRTVDGMQEEGMPYTGVLYAGIMLTKNGPKVLEFNCRFGDPECQVILPLLKSDLYEVIQSILDGLLCTSLPVWLDNCAAVTVVMASKGYPGDYTKGVEITGFPEAQALGLEVFQAGTALKDGKVVTNGGRVLTVTAIRENLISALEEARKGLAAIKFEGAVYRKDIGFRAIAFLQQPRGLTYKESGVDIAAGNMLVQKIKPLAKATSRPGCDVDLGGFAGLFDLKAAGFTDPLLACGTDGVGTKLKIAQQCSKHDTIGQDLVAMCVNDILAQGAEPLFFLDYFSCGKLDLRTTEAVITGIAKACKKAGCALLGGETAEMPDMYPPGEYDLAGFAVGAMERDQKLPQLERITEGDAVIGIASSGLHSNGFSLVRKIVAKSSLEYSSPAPGGCGDQTLGDLLLTPTKIYSRSLLPVLRSGRVKAVAHITGGGLLENIPRVLPQKLGVNLDAQTWRVPRIFSWLQQEGHLSEEEMARTFNCGIGAALVVSEDLVKQTLQDIEQHQEEACVIGRVVACPKGSPRVKVEHLIETMQINGSVLENGTLRNHFSVQPKKARVAVLISGTGSNLQALIDSTREPSSLAHIVIVISNKAAVAGLDKAEKAGIPTRVINHKLYKNRAAFDTAIDEVLEEFSTDIVCLAGFMRILSGPFVRKWNGKMLNIHPSLLPSFKGSNAHEQVLDAGVTVTGCTVHFVAEDVDAGQIILQEAVPVKRGDTVETLSERVKLAEHKIFPSALQLVASGAVRLGENGRICWVTED.

Ala2 bears the N-acetylalanine mark. Residues 111–318 (KEFMDRHGIS…LYEVIQSILD (208 aa)) form the ATP-grasp domain. ATP is bound by residues 190–193 (EELL), Glu197, Arg220, and Asn229. Residues Glu288 and Asn290 each coordinate Mg(2+). The residue at position 350 (Lys350) is an N6-acetyllysine. The interval 434–809 (GLTYKESGVD…HFSVQPKKAR (376 aa)) is AIRS domain. Phosphoserine is present on Ser440. Thr682 carries the phosphothreonine modification. Ser802 carries the phosphoserine modification. The segment at 810-1010 (VAVLISGTGS…NGRICWVTED (201 aa)) is GART domain. 818–820 (GSN) contributes to the N(1)-(5-phospho-beta-D-ribosyl)glycinamide binding site. (6R)-10-formyltetrahydrofolate contacts are provided by residues Arg871, 896–899 (MRIL), and Asn913. His915 acts as the Proton donor in catalysis. Residue 947–951 (AEDVD) coordinates (6R)-10-formyltetrahydrofolate. 977-980 (KLAE) serves as a coordination point for N(1)-(5-phospho-beta-D-ribosyl)glycinamide.

The protein in the N-terminal section; belongs to the GARS family. In the central section; belongs to the AIR synthase family. This sequence in the C-terminal section; belongs to the GART family. Homodimer. Mg(2+) serves as cofactor. It depends on Mn(2+) as a cofactor.

The catalysed reaction is 5-phospho-beta-D-ribosylamine + glycine + ATP = N(1)-(5-phospho-beta-D-ribosyl)glycinamide + ADP + phosphate + H(+). It catalyses the reaction 2-formamido-N(1)-(5-O-phospho-beta-D-ribosyl)acetamidine + ATP = 5-amino-1-(5-phospho-beta-D-ribosyl)imidazole + ADP + phosphate + H(+). The enzyme catalyses N(1)-(5-phospho-beta-D-ribosyl)glycinamide + (6R)-10-formyltetrahydrofolate = N(2)-formyl-N(1)-(5-phospho-beta-D-ribosyl)glycinamide + (6S)-5,6,7,8-tetrahydrofolate + H(+). It participates in purine metabolism; IMP biosynthesis via de novo pathway; 5-amino-1-(5-phospho-D-ribosyl)imidazole from N(2)-formyl-N(1)-(5-phospho-D-ribosyl)glycinamide: step 2/2. The protein operates within purine metabolism; IMP biosynthesis via de novo pathway; N(1)-(5-phospho-D-ribosyl)glycinamide from 5-phospho-alpha-D-ribose 1-diphosphate: step 2/2. Its pathway is purine metabolism; IMP biosynthesis via de novo pathway; N(2)-formyl-N(1)-(5-phospho-D-ribosyl)glycinamide from N(1)-(5-phospho-D-ribosyl)glycinamide (10-formyl THF route): step 1/1. In terms of biological role, trifunctional enzyme that catalyzes three distinct reactions as part of the 'de novo' inosine monophosphate biosynthetic pathway. This chain is Trifunctional purine biosynthetic protein adenosine-3 (GART), found in Bos taurus (Bovine).